We begin with the raw amino-acid sequence, 403 residues long: Acetate kinase (403 aa).

Asparagine 8 is a Mg(2+) binding site. Lysine 15 contributes to the ATP binding site. Arginine 90 is a substrate binding site. Catalysis depends on aspartate 147, which acts as the Proton donor/acceptor. ATP-binding positions include 207–211 (HLGSG), 282–284 (DLR), and 330–334 (GVGEN). A Mg(2+)-binding site is contributed by glutamate 384.

The protein belongs to the acetokinase family. In terms of assembly, homodimer. The cofactor is Mg(2+). Mn(2+) serves as cofactor.

The protein resides in the cytoplasm. The enzyme catalyses acetate + ATP = acetyl phosphate + ADP. The protein operates within metabolic intermediate biosynthesis; acetyl-CoA biosynthesis; acetyl-CoA from acetate: step 1/2. Functionally, catalyzes the formation of acetyl phosphate from acetate and ATP. Can also catalyze the reverse reaction. The chain is Acetate kinase from Exiguobacterium sp. (strain ATCC BAA-1283 / AT1b).